The chain runs to 202 residues: dTTP/UTP pyrophosphatase (202 aa).

D74 (proton acceptor) is an active-site residue.

Belongs to the Maf family. YhdE subfamily. A divalent metal cation is required as a cofactor.

It is found in the cytoplasm. The catalysed reaction is dTTP + H2O = dTMP + diphosphate + H(+). The enzyme catalyses UTP + H2O = UMP + diphosphate + H(+). Nucleoside triphosphate pyrophosphatase that hydrolyzes dTTP and UTP. May have a dual role in cell division arrest and in preventing the incorporation of modified nucleotides into cellular nucleic acids. In Methylococcus capsulatus (strain ATCC 33009 / NCIMB 11132 / Bath), this protein is dTTP/UTP pyrophosphatase.